The following is a 208-amino-acid chain: Small ribosomal subunit protein eS8 (208 aa).

The segment at Met1–Lys23 is disordered. Positions Ala8–Lys23 are enriched in basic residues.

The protein belongs to the eukaryotic ribosomal protein eS8 family. As to quaternary structure, component of the small ribosomal subunit. Identified in a IGF2BP1-dependent mRNP granule complex containing untranslated mRNAs. Part of the small subunit (SSU) processome, composed of more than 70 proteins and the RNA chaperone small nucleolar RNA (snoRNA) U3.

It localises to the cytoplasm. The protein localises to the membrane. The protein resides in the nucleus. It is found in the nucleolus. In terms of biological role, component of the small ribosomal subunit. The ribosome is a large ribonucleoprotein complex responsible for the synthesis of proteins in the cell. Part of the small subunit (SSU) processome, first precursor of the small eukaryotic ribosomal subunit. During the assembly of the SSU processome in the nucleolus, many ribosome biogenesis factors, an RNA chaperone and ribosomal proteins associate with the nascent pre-rRNA and work in concert to generate RNA folding, modifications, rearrangements and cleavage as well as targeted degradation of pre-ribosomal RNA by the RNA exosome. This is Small ribosomal subunit protein eS8 (RpS8) from Drosophila melanogaster (Fruit fly).